A 417-amino-acid polypeptide reads, in one-letter code: Serine hydroxymethyltransferase (417 aa).

Residues Leu122 and Gly126–Leu128 each bind (6S)-5,6,7,8-tetrahydrofolate. The residue at position 231 (Lys231) is an N6-(pyridoxal phosphate)lysine.

This sequence belongs to the SHMT family. As to quaternary structure, homodimer. Requires pyridoxal 5'-phosphate as cofactor.

The protein localises to the cytoplasm. It carries out the reaction (6R)-5,10-methylene-5,6,7,8-tetrahydrofolate + glycine + H2O = (6S)-5,6,7,8-tetrahydrofolate + L-serine. It functions in the pathway one-carbon metabolism; tetrahydrofolate interconversion. The protein operates within amino-acid biosynthesis; glycine biosynthesis; glycine from L-serine: step 1/1. Functionally, catalyzes the reversible interconversion of serine and glycine with tetrahydrofolate (THF) serving as the one-carbon carrier. This reaction serves as the major source of one-carbon groups required for the biosynthesis of purines, thymidylate, methionine, and other important biomolecules. Also exhibits THF-independent aldolase activity toward beta-hydroxyamino acids, producing glycine and aldehydes, via a retro-aldol mechanism. The protein is Serine hydroxymethyltransferase of Caldicellulosiruptor saccharolyticus (strain ATCC 43494 / DSM 8903 / Tp8T 6331).